The sequence spans 376 residues: UPF0754 membrane protein SE_1527 (376 aa).

The next 2 helical transmembrane spans lie at 4-24 (ILLV…TNMI) and 356-376 (TLGF…AIFV).

It belongs to the UPF0754 family.

Its subcellular location is the cell membrane. The chain is UPF0754 membrane protein SE_1527 from Staphylococcus epidermidis (strain ATCC 12228 / FDA PCI 1200).